A 221-amino-acid chain; its full sequence is uncharacterized protein (221 aa).

Residues 40–162 (TIEVEPSPVQ…EPPEKVELSP (123 aa)) form a disordered region. Polar residues predominate over residues 47–60 (PVQQDNPPISSEQA). The segment covering 82 to 92 (SSAQQEATAQT) has biased composition (low complexity).

This is an uncharacterized protein from Homo sapiens (Human).